A 577-amino-acid polypeptide reads, in one-letter code: Anthranilate synthase alpha subunit 1, chloroplastic (577 aa).

The transit peptide at 1 to 34 (MASLVLSLRIAPSTPPLGLGGGRFRGRRGAVACR) directs the protein to the chloroplast.

This sequence belongs to the anthranilate synthase component I family. In terms of assembly, heterotetramer consisting of two non-identical subunits: a beta subunit and a large alpha subunit.

Its subcellular location is the plastid. The protein localises to the chloroplast. It carries out the reaction chorismate + L-glutamine = anthranilate + pyruvate + L-glutamate + H(+). The protein operates within amino-acid biosynthesis; L-tryptophan biosynthesis; L-tryptophan from chorismate: step 1/5. With respect to regulation, feedback inhibition by tryptophan. In terms of biological role, part of a heterotetrameric complex that catalyzes the two-step biosynthesis of anthranilate, an intermediate in the biosynthesis of L-tryptophan. In the first step, the glutamine-binding beta subunit of anthranilate synthase (AS) provides the glutamine amidotransferase activity which generates ammonia as a substrate that, along with chorismate, is used in the second step, catalyzed by the large alpha subunit of AS to produce anthranilate. In Oryza sativa subsp. indica (Rice), this protein is Anthranilate synthase alpha subunit 1, chloroplastic (ASA1).